The chain runs to 438 residues: GRAS family protein TF80 (438 aa).

The GRAS domain occupies 13–436; that stretch reads LRYDSHGSNP…RPLFSVSAWK (424 aa). The tract at residues 20–81 is leucine repeat I (LRI); the sequence is SNPMIPLIEC…YKIVKHLPGV (62 aa). Residues 100–165 are VHIID; sequence QKYFYDLCPF…GGPPFLKITG (66 aa). The VHIID motif lies at 131–135; sequence VHIID. The tract at residues 175–207 is leucine repeat II (LRII); it reads QMSFHLTTEAGILDFPLQFNPIISKLEDVDFEN. The tract at residues 216-359 is PFYRE; the sequence is VAISSVLQLH…SMLLGEQIKN (144 aa). Residues 224–228 carry the LXXLL motif motif; that stretch reads LHSLL. The tract at residues 362–436 is SAW; it reads TCEGVDRKER…RPLFSVSAWK (75 aa).

It belongs to the GRAS family. In terms of assembly, interacts with RAM1.

The protein resides in the nucleus. The chain is GRAS family protein TF80 (TF80) from Medicago truncatula (Barrel medic).